We begin with the raw amino-acid sequence, 253 residues long: 5'/3'-nucleotidase SurE (253 aa).

4 residues coordinate a divalent metal cation: D8, D9, S39, and N92.

It belongs to the SurE nucleotidase family. Requires a divalent metal cation as cofactor.

The protein resides in the cytoplasm. The enzyme catalyses a ribonucleoside 5'-phosphate + H2O = a ribonucleoside + phosphate. It catalyses the reaction a ribonucleoside 3'-phosphate + H2O = a ribonucleoside + phosphate. It carries out the reaction [phosphate](n) + H2O = [phosphate](n-1) + phosphate + H(+). Its function is as follows. Nucleotidase with a broad substrate specificity as it can dephosphorylate various ribo- and deoxyribonucleoside 5'-monophosphates and ribonucleoside 3'-monophosphates with highest affinity to 3'-AMP. Also hydrolyzes polyphosphate (exopolyphosphatase activity) with the preference for short-chain-length substrates (P20-25). Might be involved in the regulation of dNTP and NTP pools, and in the turnover of 3'-mononucleotides produced by numerous intracellular RNases (T1, T2, and F) during the degradation of various RNAs. The sequence is that of 5'/3'-nucleotidase SurE from Citrobacter koseri (strain ATCC BAA-895 / CDC 4225-83 / SGSC4696).